Consider the following 234-residue polypeptide: Leucyl/phenylalanyl-tRNA--protein transferase (234 aa).

Belongs to the L/F-transferase family.

Its subcellular location is the cytoplasm. It catalyses the reaction N-terminal L-lysyl-[protein] + L-leucyl-tRNA(Leu) = N-terminal L-leucyl-L-lysyl-[protein] + tRNA(Leu) + H(+). It carries out the reaction N-terminal L-arginyl-[protein] + L-leucyl-tRNA(Leu) = N-terminal L-leucyl-L-arginyl-[protein] + tRNA(Leu) + H(+). The catalysed reaction is L-phenylalanyl-tRNA(Phe) + an N-terminal L-alpha-aminoacyl-[protein] = an N-terminal L-phenylalanyl-L-alpha-aminoacyl-[protein] + tRNA(Phe). Functionally, functions in the N-end rule pathway of protein degradation where it conjugates Leu, Phe and, less efficiently, Met from aminoacyl-tRNAs to the N-termini of proteins containing an N-terminal arginine or lysine. In Tolumonas auensis (strain DSM 9187 / NBRC 110442 / TA 4), this protein is Leucyl/phenylalanyl-tRNA--protein transferase.